Consider the following 826-residue polypeptide: Arf-GAP with ANK repeat and PH domain-containing protein cnt-1 (826 aa).

The PH domain maps to 275–373 (DVMMEGYLYK…WMRALQRTIL (99 aa)). The region spanning 447-572 (TTAFEQVRRV…RFAVAEDTRA (126 aa)) is the Arf-GAP domain. A C4-type zinc finger spans residues 462–485 (CADCGSPAPKWVSINLGVVLCIEC). A disordered region spans residues 570 to 604 (TRARSSATNRQEHLKHKTSIGGNSSSNGVNRSSSY). The segment covering 588–603 (SIGGNSSSNGVNRSSS) has biased composition (low complexity). ANK repeat units lie at residues 690 to 719 (NGTT…KINM), 723 to 752 (KLNT…DSNL), and 756 to 789 (DSKT…NADF).

Interacts (via C-terminal ankyrin repeat) with rab-10 (GTP-bound form); the interaction is required for cnt-1 recruitment to endosomes. Interacts (via C-terminal ankyrin repeat) with rab-8 (GTP-bound form) and rab-35 (GTP-bound form). Cleaved by caspase ced-3 after Asp-382 and Asp-609. Cleavage at Asp-382 is required for subsequent cleavage at Asp-609.

It localises to the cytoplasm. The protein resides in the recycling endosome membrane. The protein localises to the basolateral cell membrane. It is found in the apical cell membrane. Its subcellular location is the cell membrane. In terms of biological role, GTPase-activating protein for the ADP ribosylation factor family. Regulates endosome recycling downstream of rab-10 and upstream of arf-6. Its function is as follows. Promotes apoptosis during embryonic development. Produced by caspase ced-3-mediated cleavage, and translocates to the plasma membrane where it prevents the activation of the prosurvival Akt-1/2 and sgk-1 signaling pathway by competing with Akt-1/2 for the binding to PtdIns(3,4,5)P3. The polypeptide is Arf-GAP with ANK repeat and PH domain-containing protein cnt-1 (Caenorhabditis elegans).